A 158-amino-acid polypeptide reads, in one-letter code: NAD(P)H-quinone oxidoreductase subunit J, chloroplastic (158 aa).

The protein belongs to the complex I 30 kDa subunit family. NDH is composed of at least 16 different subunits, 5 of which are encoded in the nucleus.

The protein resides in the plastid. Its subcellular location is the chloroplast thylakoid membrane. The catalysed reaction is a plastoquinone + NADH + (n+1) H(+)(in) = a plastoquinol + NAD(+) + n H(+)(out). It catalyses the reaction a plastoquinone + NADPH + (n+1) H(+)(in) = a plastoquinol + NADP(+) + n H(+)(out). Its function is as follows. NDH shuttles electrons from NAD(P)H:plastoquinone, via FMN and iron-sulfur (Fe-S) centers, to quinones in the photosynthetic chain and possibly in a chloroplast respiratory chain. The immediate electron acceptor for the enzyme in this species is believed to be plastoquinone. Couples the redox reaction to proton translocation, and thus conserves the redox energy in a proton gradient. This chain is NAD(P)H-quinone oxidoreductase subunit J, chloroplastic, found in Lactuca sativa (Garden lettuce).